A 194-amino-acid polypeptide reads, in one-letter code: Outer membrane protein A (194 aa).

The signal sequence occupies residues 1-24; sequence MNKPSKFALALAFAAVTASGVASA. A beta stranded membrane pass occupies residues 30–38; the sequence is WRNPYGNVW. Positions 77-193 constitute an OmpA-like domain; that stretch reads MAAKVVFNAD…RVEIEIVGSR (117 aa).

It belongs to the outer membrane OOP (TC 1.B.6) superfamily.

The protein resides in the cell outer membrane. Functionally, structural protein that may protect the integrity of the bacterium. The chain is Outer membrane protein A from Bordetella avium.